The primary structure comprises 391 residues: Elongation factor Tu (391 aa).

One can recognise a tr-type G domain in the interval 10-201 (KPHVNIGTIG…AVDEYIPTPA (192 aa)). A G1 region spans residues 19–26 (GHVDHGKT). 19-26 (GHVDHGKT) lines the GTP pocket. Thr26 contributes to the Mg(2+) binding site. Residues 55–59 (GITIS) form a G2 region. Positions 76–79 (DCPG) are G3. GTP is bound by residues 76 to 80 (DCPGH) and 131 to 134 (NKVD). Residues 131–134 (NKVD) form a G4 region. The tract at residues 169-171 (SAL) is G5.

It belongs to the TRAFAC class translation factor GTPase superfamily. Classic translation factor GTPase family. EF-Tu/EF-1A subfamily. As to quaternary structure, monomer.

It localises to the cytoplasm. The enzyme catalyses GTP + H2O = GDP + phosphate + H(+). GTP hydrolase that promotes the GTP-dependent binding of aminoacyl-tRNA to the A-site of ribosomes during protein biosynthesis. The polypeptide is Elongation factor Tu (Ruegeria pomeroyi (strain ATCC 700808 / DSM 15171 / DSS-3) (Silicibacter pomeroyi)).